Consider the following 468-residue polypeptide: Methylenetetrahydrofolate--tRNA-(uracil-5-)-methyltransferase TrmFO (468 aa).

10-15 serves as a coordination point for FAD; the sequence is GGGLAG.

The protein belongs to the MnmG family. TrmFO subfamily. Requires FAD as cofactor.

The protein localises to the cytoplasm. The catalysed reaction is uridine(54) in tRNA + (6R)-5,10-methylene-5,6,7,8-tetrahydrofolate + NADH + H(+) = 5-methyluridine(54) in tRNA + (6S)-5,6,7,8-tetrahydrofolate + NAD(+). It catalyses the reaction uridine(54) in tRNA + (6R)-5,10-methylene-5,6,7,8-tetrahydrofolate + NADPH + H(+) = 5-methyluridine(54) in tRNA + (6S)-5,6,7,8-tetrahydrofolate + NADP(+). Its function is as follows. Catalyzes the folate-dependent formation of 5-methyl-uridine at position 54 (M-5-U54) in all tRNAs. The polypeptide is Methylenetetrahydrofolate--tRNA-(uracil-5-)-methyltransferase TrmFO (Chelativorans sp. (strain BNC1)).